We begin with the raw amino-acid sequence, 146 residues long: Prostaglandin E synthase 3 (146 aa).

The region spanning 1 to 76 is the CS domain; it reads VFIEFCVEDS…ESGQAWPRLT (76 aa). A disordered region spans residues 110–146; the sequence is SEMMNNMGGDDDVDLPEVDGADDDSPDSDDEKMPDLE. The span at 118–139 shows a compositional bias: acidic residues; that stretch reads GDDDVDLPEVDGADDDSPDSDD.

It belongs to the p23/wos2 family. As to quaternary structure, binds to telomerase. Binds to the progesterone receptor.

It localises to the cytoplasm. The enzyme catalyses prostaglandin H2 = prostaglandin E2. Its pathway is lipid metabolism; prostaglandin biosynthesis. Its function is as follows. Molecular chaperone. In Gallus gallus (Chicken), this protein is Prostaglandin E synthase 3 (PTGES3).